The sequence spans 113 residues: Large ribosomal subunit protein uL22 (113 aa).

The protein belongs to the universal ribosomal protein uL22 family. As to quaternary structure, part of the 50S ribosomal subunit.

In terms of biological role, this protein binds specifically to 23S rRNA; its binding is stimulated by other ribosomal proteins, e.g. L4, L17, and L20. It is important during the early stages of 50S assembly. It makes multiple contacts with different domains of the 23S rRNA in the assembled 50S subunit and ribosome. Its function is as follows. The globular domain of the protein is located near the polypeptide exit tunnel on the outside of the subunit, while an extended beta-hairpin is found that lines the wall of the exit tunnel in the center of the 70S ribosome. This Symbiobacterium thermophilum (strain DSM 24528 / JCM 14929 / IAM 14863 / T) protein is Large ribosomal subunit protein uL22.